The following is a 1430-amino-acid chain: MSRPSSVSPRQPAPGGGGGGGPSPCGPGGGGRAKGLKDIRIDEEVKIAVNIALERFRYGDQREMEFPSSLTSTERAFIHRLSQSLGLVSKSKGKGANRYLTVKKKDGSETAHAMMTCNLTHNTKHAVRSLIQRFPVTNKERTELLPKTERGNVFAVEAENREMSKTSGRLNNGIPQIPVKRGESEFDSFRQSLPVFEKQEEIVKIIKENKVVLIVGETGSGKTTQIPQFLLDDCFKNGIPCRIFCTQPRRLAAIAVAERVAAERRERIGQTIGYQIRLESRVSPKTLLTFCTNGVLLRTLMAGDSTLSTVTHVIVDEVHERDRFSDFLLTKLRDLLQKHPTLKLILSSAALDVNLFIRYFGSCPVIYIQGRPFEVKEMFLEDILRTTGYTNKEMLKYKKEKQQEEKQQTTLTEWYSAQENSFKPGSQRQRTVLNVTDEYDLLDDGGDAVFSQLTEKDVNCLEPWLVKEMDACLSDIWLHKDIDAFAQVFHLILTENVSVDYRHSETSATALMVAAGRGFASQVEQLISMGANVHSKASNGWMALDWAKHFGQTEIVDLLESYSASLEFGNLDESSLVQTNGSDLSAEDRELLKAYHHSFDDEKVDLDLIMHLLYNICHSCDAGAVLIFLPGYDEIVGLRDRILFDDKRFADNTHRYQVFMLHSNMQTSDQKKVLKNPPAGVRKIILSTNIAETSITVNDVVFVIDSGKVKEKSFDALNFVTMLKMVWISKASAIQRKGRAGRCRPGICFRLFSRLRFQNMLEFQTPELLRMPLQELCLHTKLLAPVNCPVADFLMKAPEPPPALIVRNAVQMLKTIDAMDTWEDLTELGYHLADLPVEPHLGKMVLCAVVLKCLDPILTIACTLAYRDPFVLPTQASQKRAAMLCRKRFTAGAFSDHMALLRAFQAWQKARSDGWERAFCEKNFLSQATMEIIIGMRTQLLGQLRASGFVRARGGGDIRDVNTNSENWAVVKAALVAGMYPNLVHVDRENLVLTGPKEKKVRFHPASVLSQPQYKKIPPANGQAAAIKALPTDWLIYDEMTRAHRIANIRCCSAVTPVTILVFCGPARLASNALQEPSSFRVDGIPNDSSDSEMEDKTTANLAALKLDEWLHFKLEPEAASLLLQLRQKWHSLFLRRMRAPSKPWSQVDEATIRAIIAVLSTEEQSAGLQQPSGIGQRPRPMSSEELPLASSWRSNNSRKSSADTEFSDECTTAERVLMKSPSPALHPPQKYKDRGILHPKRGTEDRSDQSSVKSTDSSSYPSPCASPSPPSSGKGSKSPSPRPNMPVRYFIMKSSNLRNLEISQQKGIWSTTPSNERKLNRAFWESSMVYLVFSVQGSGHFQGFSRMSSEIGREKSQDWGSAGLGGVFKVEWIRKESLPFQFAHHLLNPWNDNKKVQISRDGQELEPQVGEQLLQLWERLPLGEKNTTD.

The disordered stretch occupies residues 1–37 (MSRPSSVSPRQPAPGGGGGGGPSPCGPGGGGRAKGLK). Residues 14–33 (PGGGGGGGPSPCGPGGGGRA) are compositionally biased toward gly residues. An R3H domain is found at 38 to 106 (DIRIDEEVKI…NRYLTVKKKD (69 aa)). In terms of domain architecture, Helicase ATP-binding spans 203–369 (VKIIKENKVV…FGSCPVIYIQ (167 aa)). An ATP-binding site is contributed by 216–223 (GETGSGKT). A DEAH box motif is present at residues 316-319 (DEVH). 2 ANK repeats span residues 506 to 538 (TSAT…SKAS) and 539 to 571 (NGWM…FGNL). The Helicase C-terminal domain maps to 612–784 (LLYNICHSCD…ELCLHTKLLA (173 aa)). 3 positions are modified to phosphoserine: Ser1089, Ser1090, and Ser1092. Residues 1164–1174 (EQSAGLQQPSG) are compositionally biased toward polar residues. The segment at 1164–1288 (EQSAGLQQPS…SPSPRPNMPV (125 aa)) is disordered. Low complexity predominate over residues 1191 to 1200 (SSWRSNNSRK). Ser1202 carries the post-translational modification Phosphoserine. Over residues 1231 to 1249 (KYKDRGILHPKRGTEDRSD) the composition is skewed to basic and acidic residues. Positions 1250–1264 (QSSVKSTDSSSYPSP) are enriched in low complexity. Phosphoserine occurs at positions 1263, 1267, and 1281. The YTH domain maps to 1288–1418 (VRYFIMKSSN…QVGEQLLQLW (131 aa)). Residues 1294 to 1296 (KSS), Trp1310, and Trp1360 each bind RNA.

The protein belongs to the DEAD box helicase family. DEAH subfamily. In terms of assembly, interacts with MEIOC; binds transcripts that regulate the mitotic cell cycle inhibiting progression into metaphase, thereby allowing meiotic prophase to proceed normally. Interacts (via ANK repeats) with XRN1. Interacts with ZCCHC4. Associates with the small ribosomal subunit. Interacts with RBM46.

It localises to the cytoplasm. Its subcellular location is the perinuclear region. It carries out the reaction ATP + H2O = ADP + phosphate + H(+). 3'-5' RNA helicase that plays a key role in the male and female germline by promoting transition from mitotic to meiotic divisions in stem cells. Specifically recognizes and binds N6-methyladenosine (m6A)-containing RNAs, a modification present at internal sites of mRNAs and some non-coding RNAs that plays a role in the efficiency of RNA processing and stability. Essential for ensuring a successful progression of the meiotic program in the germline by regulating the level of m6A-containing RNAs. Acts by binding and promoting degradation of m6A-containing mRNAs: the 3'-5' RNA helicase activity is required for this process and RNA degradation may be mediated by XRN1 exoribonuclease. Required for both spermatogenesis and oogenesis. This chain is 3'-5' RNA helicase YTHDC2, found in Pongo abelii (Sumatran orangutan).